The primary structure comprises 191 residues: UPF0669 protein C6orf120 (191 aa).

The N-terminal stretch at 1-30 (MAAPRGRAAPWTTALLLLLASQVLSPGSCA) is a signal peptide. N-linked (GlcNAc...) asparagine glycosylation is present at N53.

This sequence belongs to the UPF0669 family. In terms of tissue distribution, mainly expressed in hepatocytes and some weak expression in germinal center cells of lymph nodes.

The protein resides in the secreted. Its function is as follows. May be involved in induction of apoptosis in CD4(+) T-cells, but not CD8(+) T-cells or hepatocytes. The chain is UPF0669 protein C6orf120 (C6orf120) from Homo sapiens (Human).